Here is a 219-residue protein sequence, read N- to C-terminus: MKDFSDFFRNPHIWDREIVAVGGDLSPERLLYAYKNGIFPWSDQPILWYCLDPRGIFDLNKLHISKRLKRKINQKRYTITFNRAFEQVMRCCAYRPGEETWITDLFIKSYTEFHKLGYAHSIEVWDENGNLGGGVYGVAIGNFFAGESMFSFISDFGKIGLFHLFEALKKDQFTLFDTQQLNIVTLCLGAYQIPKKEYLRRLESAVASGKKWNPLRTVF.

The protein belongs to the L/F-transferase family.

It is found in the cytoplasm. The enzyme catalyses N-terminal L-lysyl-[protein] + L-leucyl-tRNA(Leu) = N-terminal L-leucyl-L-lysyl-[protein] + tRNA(Leu) + H(+). It catalyses the reaction N-terminal L-arginyl-[protein] + L-leucyl-tRNA(Leu) = N-terminal L-leucyl-L-arginyl-[protein] + tRNA(Leu) + H(+). The catalysed reaction is L-phenylalanyl-tRNA(Phe) + an N-terminal L-alpha-aminoacyl-[protein] = an N-terminal L-phenylalanyl-L-alpha-aminoacyl-[protein] + tRNA(Phe). Functions in the N-end rule pathway of protein degradation where it conjugates Leu, Phe and, less efficiently, Met from aminoacyl-tRNAs to the N-termini of proteins containing an N-terminal arginine or lysine. This is Leucyl/phenylalanyl-tRNA--protein transferase from Leptospira borgpetersenii serovar Hardjo-bovis (strain JB197).